We begin with the raw amino-acid sequence, 831 residues long: Heat shock 70 kDa protein 14 (831 aa).

2 disordered regions span residues 503 to 579 (EEVE…KKKV) and 786 to 831 (TKPK…EGST). A compositionally biased stretch (basic and acidic residues) spans 509–526 (VTKEHSEETTKMDSDKAS). Residue serine 533 is modified to Phosphoserine.

This sequence belongs to the heat shock protein 70 (TC 1.A.33) family. HSP110/SSE subfamily. Interacts with HTT1 in both cytoplasm and nucleus. Constitutively expressed.

It is found in the cytoplasm. Its subcellular location is the nucleus. In terms of biological role, in cooperation with other chaperones, Hsp70s are key components that facilitate folding of de novo synthesized proteins, assist translocation of precursor proteins into organelles, and are responsible for degradation of damaged protein under stress conditions. The chain is Heat shock 70 kDa protein 14 (HSP70-14) from Arabidopsis thaliana (Mouse-ear cress).